A 193-amino-acid chain; its full sequence is Phosphatidylglycerophosphatase and protein-tyrosine phosphatase 1 (193 aa).

The transit peptide at 1–31 directs the protein to the mitochondrion; the sequence is MAASAWLEAGLARVLFYPTLLYTVFRGRVGG. The region spanning 37-188 is the Tyrosine-protein phosphatase domain; it reads WYHRIDHTVL…LKEFHKEIAA (152 aa). Residue lysine 85 is modified to N6-succinyllysine. Cysteine 132 acts as the Phosphocysteine intermediate in catalysis.

Belongs to the protein-tyrosine phosphatase family. Non-receptor class dual specificity subfamily. Interacts with STYXL1; the interaction inhibits PTPMT1 catalytic activity. In terms of tissue distribution, expressed in liver and in pancreatic beta cells.

The protein resides in the mitochondrion inner membrane. The enzyme catalyses O-phospho-L-tyrosyl-[protein] + H2O = L-tyrosyl-[protein] + phosphate. It catalyses the reaction O-phospho-L-seryl-[protein] + H2O = L-seryl-[protein] + phosphate. The catalysed reaction is O-phospho-L-threonyl-[protein] + H2O = L-threonyl-[protein] + phosphate. It carries out the reaction a 1,2-diacyl-sn-glycero-3-phospho-(1'-sn-glycero-3'-phosphate) + H2O = a 1,2-diacyl-sn-glycero-3-phospho-(1'-sn-glycerol) + phosphate. The enzyme catalyses 1,2-di-(9Z-octadecenoyl)-sn-glycero-3-phospho-(1'-sn-glycerol-3'-phosphate) + H2O = 1,2-di-(9Z-octadecenoyl)-sn-glycero-3-phospho-(1'-sn-glycerol) + phosphate. It catalyses the reaction 1,2-dioctanoyl-sn-glycero-3-phospho-(1D-myo-inositol-5-phosphate) + H2O = 1,2-dioctanoyl-sn-glycero-3-phospho-(1D-myo-inositol) + phosphate. The catalysed reaction is a 1-acyl-2-hexanoyl-sn-glycero-3-phospho-(1D-myo-inositol-5-phosphate) + H2O = a 1-acyl-2-hexanoyl-sn-glycero-3-phospho-(1D-myo-inositol) + phosphate. It carries out the reaction 1,2-dibutyryl-sn-glycero-3-phospho-(1D-myo-inositol-5-phosphate) + H2O = 1,2-dibutyryl-sn-glycero-3-phospho-(1D-myo-inositol) + phosphate. It functions in the pathway phospholipid metabolism; phosphatidylglycerol biosynthesis; phosphatidylglycerol from CDP-diacylglycerol: step 2/2. Its function is as follows. Lipid phosphatase which dephosphorylates phosphatidylglycerophosphate (PGP) to phosphatidylglycerol (PG). PGP is an essential intermediate in the biosynthetic pathway of cardiolipin, a mitochondrial-specific phospholipid regulating the membrane integrity and activities of the organelle. Has also been shown to display phosphatase activity toward phosphoprotein substrates, specifically mediates dephosphorylation of mitochondrial proteins, thereby playing an essential role in ATP production. Has probably a preference for proteins phosphorylated on Ser and/or Thr residues compared to proteins phosphorylated on Tyr residues. Probably involved in regulation of insulin secretion in pancreatic beta cells. May prevent intrinsic apoptosis, probably by regulating mitochondrial membrane integrity. This is Phosphatidylglycerophosphatase and protein-tyrosine phosphatase 1 from Rattus norvegicus (Rat).